A 364-amino-acid chain; its full sequence is Lysophosphatidic acid receptor 1 (364 aa).

The Extracellular portion of the chain corresponds to 1–50; the sequence is MAAASTSSPVISQPQFTAMNEQQCFYNESIAFFYNRSGKYLATEWNTVSK. 2 disulfides stabilise this stretch: C24/C190 and C188/C195. 2 N-linked (GlcNAc...) asparagine glycosylation sites follow: N27 and N35. K39 is a binding site for a 1-acyl-sn-glycero-3-phosphate. The chain crosses the membrane as a helical span at residues 51 to 75; sequence LVMGLGITVCVFIMLANLLVMVAIY. The Cytoplasmic segment spans residues 76 to 83; the sequence is VNRRFHFP. Residues 84–107 traverse the membrane as a helical segment; that stretch reads IYYLMANLAAADFFAGLAYFYLMF. Residues 108–121 are Extracellular-facing; the sequence is NTGPNTRRLTVSTW. Residues 122–144 form a helical membrane-spanning segment; sequence LLRQGLIDTSLTASVANLLAIAI. 124–129 is a binding site for a 1-acyl-sn-glycero-3-phosphate; the sequence is RQGLID. Residues 145 to 163 are Cytoplasmic-facing; the sequence is ERHITVFRMQLHTRMSNRR. Residues 164-184 form a helical membrane-spanning segment; it reads VVVVIVVIWTMAIVMGAIPSV. The Extracellular portion of the chain corresponds to 185-204; that stretch reads GWNCICDIDHCSNMAPLYSD. A helical transmembrane segment spans residues 205 to 225; that stretch reads SYLVFWAIFNLVTFVVMVVLY. W210 contacts a 1-acyl-sn-glycero-3-phosphate. Residues 226–255 are Cytoplasmic-facing; the sequence is AHIFGYVRQRTMRMSRHSSGPRRNRDTMMS. Residues 256–280 form a helical membrane-spanning segment; sequence LLKTVVIVLGAFIVCWTPGLVLLLL. The Extracellular segment spans residues 281–294; sequence DVCCPQCDVLAYEK. Cysteines 284 and 287 form a disulfide. Residues 295–315 form a helical membrane-spanning segment; sequence FFLLLAEFNSAMNPIIYSYRD. The Cytoplasmic segment spans residues 316-364; the sequence is KEMSATFRQILCCQRNENPNGPTEGSDRSASSLNHTILAGVHSNDHSVV. The residue at position 341 (S341) is a Phosphoserine. T351 is subject to Phosphothreonine.

This sequence belongs to the G-protein coupled receptor 1 family. Interacts with RALA and GRK2. Interacts with GNAQ and GNA13. Interacts with CD14; the interaction is enhanced by exposure to bacterial lipopolysaccharide (LPS). N-glycosylated. Detected in lung. Detected in oligodendrocytes in corpus callosum in brain cortex (at protein level). Expressed within the embryonic cerebral cortex, where it is enriched in the ventricular zone. In the adult brain, also expressed in oligodendrocytes, as well as Schwann cells of the peripheral nervous system. Expressed in many other tissues, including lung, heart, intestine, spleen, thymus, and stomach. No expression in liver. Detected in kidney and testis. Detected in embryonic fibroblasts. Detected in adult lung fibroblasts and lung endothelial cells. Detected in dorsal root ganglion and dorsal root. Detected in astrocytes. Detected in bone.

It is found in the cell surface. It localises to the cell membrane. The protein resides in the endosome. Receptor for lysophosphatidic acid (LPA). Plays a role in the reorganization of the actin cytoskeleton, cell migration, differentiation and proliferation, and thereby contributes to the responses to tissue damage and infectious agents. Activates downstream signaling cascades via the G(i)/G(o), G(12)/G(13), and G(q) families of heteromeric G proteins. Signaling inhibits adenylyl cyclase activity and decreases cellular cAMP levels. Signaling triggers an increase of cytoplasmic Ca(2+) levels. Activates RALA; this leads to the activation of phospholipase C (PLC) and the formation of inositol 1,4,5-trisphosphate. Signaling mediates activation of down-stream MAP kinases. Contributes to the regulation of cell shape. Promotes Rho-dependent reorganization of the actin cytoskeleton in neuronal cells and neurite retraction. Promotes the activation of Rho and the formation of actin stress fibers. Promotes formation of lamellipodia at the leading edge of migrating cells via activation of RAC1. Through its function as LPA receptor, plays a role in chemotaxis and cell migration, including responses to injury and wounding. Plays a role in triggering inflammation in response to bacterial lipopolysaccharide (LPS) via its interaction with CD14. Promotes cell proliferation in response to LPA. Inhibits the intracellular ciliogenesis pathway in response to LPA and through AKT1 activation. Required for normal skeleton development. May play a role in osteoblast differentiation. Required for normal brain development. Required for normal proliferation, survival and maturation of newly formed neurons in the adult dentate gyrus. Plays a role in pain perception and in the initiation of neuropathic pain. This Mus musculus (Mouse) protein is Lysophosphatidic acid receptor 1 (Lpar1).